Here is a 311-residue protein sequence, read N- to C-terminus: Lipoyl synthase (311 aa).

[4Fe-4S] cluster-binding residues include C47, C52, C58, C73, C77, C80, and S286. Residues 59 to 276 (WSRHTATYLA…RSVGESLGLF (218 aa)) enclose the Radical SAM core domain.

Belongs to the radical SAM superfamily. Lipoyl synthase family. Requires [4Fe-4S] cluster as cofactor.

The protein localises to the cytoplasm. The enzyme catalyses [[Fe-S] cluster scaffold protein carrying a second [4Fe-4S](2+) cluster] + N(6)-octanoyl-L-lysyl-[protein] + 2 oxidized [2Fe-2S]-[ferredoxin] + 2 S-adenosyl-L-methionine + 4 H(+) = [[Fe-S] cluster scaffold protein] + N(6)-[(R)-dihydrolipoyl]-L-lysyl-[protein] + 4 Fe(3+) + 2 hydrogen sulfide + 2 5'-deoxyadenosine + 2 L-methionine + 2 reduced [2Fe-2S]-[ferredoxin]. It participates in protein modification; protein lipoylation via endogenous pathway; protein N(6)-(lipoyl)lysine from octanoyl-[acyl-carrier-protein]: step 2/2. Functionally, catalyzes the radical-mediated insertion of two sulfur atoms into the C-6 and C-8 positions of the octanoyl moiety bound to the lipoyl domains of lipoate-dependent enzymes, thereby converting the octanoylated domains into lipoylated derivatives. The polypeptide is Lipoyl synthase (Chlamydia trachomatis serovar L2 (strain ATCC VR-902B / DSM 19102 / 434/Bu)).